A 584-amino-acid chain; its full sequence is uncharacterized protein (584 aa).

11 PbH1 repeats span residues 100 to 128 (QENI…RSTH), 139 to 161 (CSNV…IVSP), 173 to 195 (SEQI…SITG), 196 to 225 (CDMV…DIEG), 236 to 266 (PINV…LIEG), 313 to 333 (TSDA…IDVR), 334 to 356 (GKSV…LVYQ), 357 to 382 (SSDV…GLRA), 406 to 427 (GGNM…WIAQ), 456 to 478 (NAGA…YCST), and 529 to 554 (SAGS…QTNT).

This is an uncharacterized protein from Bacillus subtilis (strain 168).